The chain runs to 433 residues: Ribulose bisphosphate carboxylase/oxygenase activase, chloroplastic (433 aa).

Residues 1–20 are compositionally biased toward polar residues; the sequence is MAAAFSSTVGAPASTPTRSS. The transit peptide at 1–53 directs the protein to the chloroplast; that stretch reads MAAAFSSTVGAPASTPTRSSFLGKKLNKPQVSAAVTYHGKSSSSNSRFKAMAA. Residues 1–60 are disordered; the sequence is MAAAFSSTVGAPASTPTRSSFLGKKLNKPQVSAAVTYHGKSSSSNSRFKAMAAKEVDETK. Position 161–168 (161–168) interacts with ATP; sequence GGKGQGKS.

This sequence belongs to the RuBisCO activase family.

The protein localises to the plastid. It localises to the chloroplast stroma. Its function is as follows. Activation of RuBisCO (ribulose-1,5-bisphosphate carboxylase/oxygenase; EC 4.1.1.39) involves the ATP-dependent carboxylation of the epsilon-amino group of lysine leading to a carbamate structure. This chain is Ribulose bisphosphate carboxylase/oxygenase activase, chloroplastic (RCA1), found in Zea mays (Maize).